The primary structure comprises 345 residues: N-glycosylase/DNA lyase (345 aa).

DNA-binding residues include Asn-149, Arg-154, and Arg-204. Lys-249 acts as the Schiff-base intermediate with DNA in catalysis. Residues Pro-266 and Asp-268 each contribute to the 8-oxoguanine site. DNA contacts are provided by His-270 and Gln-287. Residues Gln-315 and Phe-319 each contribute to the 8-oxoguanine site.

This sequence belongs to the type-1 OGG1 family. Highest expression in testis.

The protein localises to the nucleus. It localises to the nucleoplasm. The protein resides in the nucleus speckle. It is found in the nucleus matrix. It catalyses the reaction 2'-deoxyribonucleotide-(2'-deoxyribose 5'-phosphate)-2'-deoxyribonucleotide-DNA = a 3'-end 2'-deoxyribonucleotide-(2,3-dehydro-2,3-deoxyribose 5'-phosphate)-DNA + a 5'-end 5'-phospho-2'-deoxyribonucleoside-DNA + H(+). In terms of biological role, DNA repair enzyme that incises DNA at 8-oxoG residues. Excises 7,8-dihydro-8-oxoguanine and 2,6-diamino-4-hydroxy-5-N-methylformamidopyrimidine (FAPY) from damaged DNA. Has a beta-lyase activity that nicks DNA 3' to the lesion. This Mus musculus (Mouse) protein is N-glycosylase/DNA lyase (Ogg1).